A 167-amino-acid chain; its full sequence is Male-specific protein scotti (167 aa).

N-linked (GlcNAc...) asparagine glycans are attached at residues Asn30, Asn124, and Asn148.

The protein belongs to the male-specific scotti family.

Post-meiotically transcribed gene that has a role in late spermiogenesis; required for actin cone progression during spermatid individualization. This is Male-specific protein scotti from Drosophila ananassae (Fruit fly).